Consider the following 299-residue polypeptide: N-acetylmuramic acid 6-phosphate etherase (299 aa).

The SIS domain maps to 54 to 217 (TIAQYKKGGR…STITMVGVGK (164 aa)). Glutamate 82 acts as the Proton donor in catalysis. Glutamate 113 is an active-site residue.

This sequence belongs to the GCKR-like family. MurNAc-6-P etherase subfamily. In terms of assembly, homodimer.

It catalyses the reaction N-acetyl-D-muramate 6-phosphate + H2O = N-acetyl-D-glucosamine 6-phosphate + (R)-lactate. It participates in amino-sugar metabolism; N-acetylmuramate degradation. Functionally, specifically catalyzes the cleavage of the D-lactyl ether substituent of MurNAc 6-phosphate, producing GlcNAc 6-phosphate and D-lactate. This is N-acetylmuramic acid 6-phosphate etherase from Staphylococcus aureus (strain USA300).